The following is a 253-amino-acid chain: Short chain dehydrogenase ple7 (253 aa).

The chain crosses the membrane as a helical span at residues 5 to 25 (IVIVTGASHGIGLATVNLLLA). The NADP(+) site is built by Val8, Arg116, Tyr148, Lys152, and Asn184. The active-site Proton acceptor is Tyr148. Residue Lys152 is the Lowers pKa of active site Tyr of the active site. N-linked (GlcNAc...) asparagine glycosylation occurs at Asn187.

Belongs to the short-chain dehydrogenases/reductases (SDR) family.

It localises to the membrane. It functions in the pathway secondary metabolite biosynthesis; terpenoid biosynthesis. Functionally, short chain dehydrogenase; part of the gene cluster that mediates the biosynthesis of pleuromutilin, a tricyclic diterpene showing antibacterial properties. The geranylgeranyl diphosphate (GGPP) synthase ple4 catalyzes the first step in pleuromutilin biosynthesis. GGPP is then substrate of the premutilin synthase (PS) ple3 to yield premutilin. Premutilin synthase is a bifunctional enzyme composed of the fusion of a class II diterpene cyclase (DTC) and a class I diterpene synthase (DTS), with the corresponding domains and active sites containing characteristic aspartate-rich motifs. GGPP is first converted to mutildienyl-diphosphate (MPP) at the class II DTC site. MPP is subsequently further cyclized at the class I DTS site, followed by a 1,5-hydride shift and addition of water prior to terminating deprotonation, to yield premutilin. The cytochrome P450 monooxygenases ple5 and ple6 hydroxylate premutilin at C-11 and C-3, respectively, producing 11-hydroxypremutilin and 3-hydroxypremutilin. The combination of the actions of both ple5 and ple6 leads to the production of 3,11-dihydroxypremutilin. The short chain dehydrogenase ple7 further converts 3,11-dihydroxypremutilin into mutilin. The acetyltransferase ple2 then acetylates mutilin to produce 14-O-acetylmutilin. Finally, the cytochrome P450 monooxygenase ple1 catalyzes hydroxylation on the alpha position of the acetyl side chain of 14-O-acetylmutilin to yield pleuromutilin. The protein is Short chain dehydrogenase ple7 of Rhodocybe pseudopiperita (Clitopilus pseudopiperitus).